A 458-amino-acid polypeptide reads, in one-letter code: Elongation factor 1-alpha (458 aa).

A N,N,N-trimethylglycine modification is found at Gly2. Lys3 is modified (N6,N6-dimethyllysine; alternate). N6-methyllysine; alternate is present on Lys3. Residues 5–240 (KTHVNVVVIG…DAIEPPVRPS (236 aa)) enclose the tr-type G domain. Positions 14-21 (GHVDSGKS) are G1. 14 to 21 (GHVDSGKS) is a binding site for GTP. An N6-methyllysine modification is found at Lys30. A G2 region spans residues 70-74 (GITID). An N6,N6,N6-trimethyllysine modification is found at Lys79. The interval 91-94 (DAPG) is G3. GTP is bound by residues 91–95 (DAPGH) and 153–156 (NKMD). Positions 153–156 (NKMD) are G4. The segment at 192–194 (SGW) is G5. The residue at position 316 (Lys316) is an N6,N6-dimethyllysine; alternate. Lys316 carries the N6-methyllysine; alternate modification. Lys390 bears the N6-methyllysine mark.

The protein belongs to the TRAFAC class translation factor GTPase superfamily. Classic translation factor GTPase family. EF-Tu/EF-1A subfamily.

The protein resides in the cytoplasm. This protein promotes the GTP-dependent binding of aminoacyl-tRNA to the A-site of ribosomes during protein biosynthesis. The protein is Elongation factor 1-alpha (TEF-1) of Mucor circinelloides f. lusitanicus (Mucor racemosus var. lusitanicus).